The primary structure comprises 156 residues: Arginine repressor (156 aa).

The protein belongs to the ArgR family.

It is found in the cytoplasm. The protein operates within amino-acid biosynthesis; L-arginine biosynthesis [regulation]. Its function is as follows. Regulates arginine biosynthesis genes. The polypeptide is Arginine repressor (Escherichia fergusonii (strain ATCC 35469 / DSM 13698 / CCUG 18766 / IAM 14443 / JCM 21226 / LMG 7866 / NBRC 102419 / NCTC 12128 / CDC 0568-73)).